The following is a 913-amino-acid chain: Protein SEY1 homolog (913 aa).

Topologically, residues 1 to 825 are cytoplasmic; sequence MTDVNKTQII…ETGGHMSLKN (825 aa). Residues 33–288 form the GB1/RHD3-type G domain; sequence GFNYNVIAIL…IPADGFAQYC (256 aa). 43–50 serves as a coordination point for GTP; it reads GSQSSGKS. The helical transmembrane segment at 826 to 846 threads the bilayer; sequence VPFAFWVILLILGWNEILMFT. The Lumenal portion of the chain corresponds to 847 to 849; sequence RLF. The helical transmembrane segment at 850-870 threads the bilayer; it reads FRLNIILPMLIGFIIIVISCL. Topologically, residues 871 to 913 are cytoplasmic; the sequence is YTGNAQILSYINKIIFIVIKNLYNFYKHLQTIGHQTTKPEKVE.

The protein belongs to the TRAFAC class dynamin-like GTPase superfamily. GB1/RHD3 GTPase family. RHD3 subfamily.

It localises to the endoplasmic reticulum membrane. Its function is as follows. Probable GTP-binding protein involved in generating and maintaining the structure of the tubular endoplasmic reticulum network. This Plasmodium berghei (strain Anka) protein is Protein SEY1 homolog.